The sequence spans 343 residues: Retroviral-like aspartic protease 1 (343 aa).

At 1–55 the chain is on the cytoplasmic side; sequence MGSPGASLGIKKALQSEQATALPASAPAVSQPTAPAPSCLPKAGQVIPTLLREAP. Positions 1–190 are excised as a propeptide; sequence MGSPGASLGI…HLPKEIVFAN (190 aa). Residues 56-76 traverse the membrane as a helical segment; that stretch reads FSSVIAPTLLCGFLFLAWVAA. Residues 77–343 lie on the Extracellular side of the membrane; it reads EVPEESSRMA…SEEGRQELSH (267 aa). A Peptidase A2 domain is found at 207-288; sequence VRFLVDSGAQ…AEEAIIGTDV (82 aa). Asp-212 is a catalytic residue. The N-linked (GlcNAc...) asparagine glycan is linked to Asn-276. Residues 327–343 constitute a propeptide that is removed on maturation; it reads LIEEDPSSEEGRQELSH.

In terms of assembly, homodimer. Post-translationally, undergoes autocleavage which is necessary for activation of the protein. In terms of tissue distribution, expressed primarily in the granular layer of the epidermis and inner root sheath of hair follicles. In psoriatic skin, expressed throughout the stratum corneum. In ulcerated skin, expressed in the stratum granulosum of intact epidermis but almost absent from ulcerated regions. Expressed in differentiated areas of squamous cell carcinomas but not in undifferentiated tumors.

It is found in the membrane. In terms of biological role, protease responsible for filaggrin processing, essential for the maintenance of a proper epidermis organization. In Homo sapiens (Human), this protein is Retroviral-like aspartic protease 1.